Consider the following 302-residue polypeptide: Porphobilinogen deaminase (302 aa).

Position 234 is an S-(dipyrrolylmethanemethyl)cysteine (Cys234).

This sequence belongs to the HMBS family. Monomer. It depends on dipyrromethane as a cofactor.

It carries out the reaction 4 porphobilinogen + H2O = hydroxymethylbilane + 4 NH4(+). The protein operates within porphyrin-containing compound metabolism; protoporphyrin-IX biosynthesis; coproporphyrinogen-III from 5-aminolevulinate: step 2/4. In terms of biological role, tetrapolymerization of the monopyrrole PBG into the hydroxymethylbilane pre-uroporphyrinogen in several discrete steps. This Corynebacterium glutamicum (strain R) protein is Porphobilinogen deaminase.